A 301-amino-acid polypeptide reads, in one-letter code: Ribosomal RNA small subunit methyltransferase A (301 aa).

Positions 18, 20, 45, 66, 91, and 112 each coordinate S-adenosyl-L-methionine. The disordered stretch occupies residues 267-301 (PPEAAPVKEKRRMAKNKMTEPANNNLNENSAPEVD). Residues 287-301 (PANNNLNENSAPEVD) are compositionally biased toward polar residues.

The protein belongs to the class I-like SAM-binding methyltransferase superfamily. rRNA adenine N(6)-methyltransferase family. RsmA subfamily.

The protein localises to the cytoplasm. The catalysed reaction is adenosine(1518)/adenosine(1519) in 16S rRNA + 4 S-adenosyl-L-methionine = N(6)-dimethyladenosine(1518)/N(6)-dimethyladenosine(1519) in 16S rRNA + 4 S-adenosyl-L-homocysteine + 4 H(+). Its function is as follows. Specifically dimethylates two adjacent adenosines (A1518 and A1519) in the loop of a conserved hairpin near the 3'-end of 16S rRNA in the 30S particle. May play a critical role in biogenesis of 30S subunits. This Colwellia psychrerythraea (strain 34H / ATCC BAA-681) (Vibrio psychroerythus) protein is Ribosomal RNA small subunit methyltransferase A.